The chain runs to 82 residues: Small ribosomal subunit protein bS16 (82 aa).

Belongs to the bacterial ribosomal protein bS16 family.

The sequence is that of Small ribosomal subunit protein bS16 from Glaesserella parasuis serovar 5 (strain SH0165) (Haemophilus parasuis).